The following is a 239-amino-acid chain: Probable transcriptional regulatory protein CD630_07950 (239 aa).

The protein belongs to the TACO1 family.

Its subcellular location is the cytoplasm. In Clostridioides difficile (strain 630) (Peptoclostridium difficile), this protein is Probable transcriptional regulatory protein CD630_07950.